A 914-amino-acid chain; its full sequence is Golgin candidate 6 (914 aa).

2 coiled-coil regions span residues 723-837 (IEKQ…SLKG) and 863-901 (EDELNDLLVCLGQEESKVEKLSAKLIELGVDVDKLLEDI). Residue Ser-911 is modified to Phosphoserine.

It localises to the golgi apparatus. The protein localises to the golgi stack. Golgi matrix protein playing a role in tethering of vesicles to Golgi membranes and in maintaining the overall structure of the Golgi apparatus. Functions in the anterograde transport of storage protein precursors from the endoplasmic reticulum (ER) to the Golgi complex. In Arabidopsis thaliana (Mouse-ear cress), this protein is Golgin candidate 6 (GC6).